We begin with the raw amino-acid sequence, 65 residues long: Large ribosomal subunit protein uL29 (65 aa).

It belongs to the universal ribosomal protein uL29 family.

The sequence is that of Large ribosomal subunit protein uL29 from Syntrophus aciditrophicus (strain SB).